We begin with the raw amino-acid sequence, 340 residues long: Immunoglobulin-binding protein 1 (340 aa).

The UIM domain maps to 47-61; sequence LELLEKAAGMLSQLD. The segment at 99 to 203 is interaction with PPP2CA; it reads RLDHLQRARE…HLLHLRRWIA (105 aa). Disordered stretches follow at residues 223–242 and 291–340; these read DSPR…PPMK and SADF…QNMG. The segment at 226 to 291 is interaction with MID1; it reads REETACHSSL…PDRGIAKPAS (66 aa). The residue at position 242 (Lys242) is an N6-acetyllysine. The span at 292 to 301 shows a compositional bias: low complexity; sequence ADFQRAAQQQ. The span at 302 to 312 shows a compositional bias: acidic residues; the sequence is EDQEQKDEESE. Positions 313 to 330 are enriched in basic and acidic residues; sequence EKALHRMREWDDWKDTHP.

Belongs to the IGBP1/TAP42 family. Interacts with PPP2CB, and with PP4 and PP6. Interacts with MID2. Interacts with ubiquitin. Interacts with partially folded PPP2CA, but not with the fully active protein. Interacts with MID1. Phosphorylated. In terms of processing, monoubiquitination by MID1 triggers calpain-mediated cleavage and switches IGBP1 activity from protective to destructive. As to expression, expressed in spleen, thymus, liver and brain. Ubiquitously expressed in B lineage cell lines.

The protein resides in the cytoplasm. In terms of biological role, associated to surface IgM-receptor; may be involved in signal transduction. Involved in regulation of the catalytic activity of the phosphatases PP2A, PP4 and PP6 by protecting their partially folded catalytic subunits from degradative polyubiquitination until they associate with regulatory subunits. This is Immunoglobulin-binding protein 1 (Igbp1) from Mus musculus (Mouse).